A 244-amino-acid chain; its full sequence is Serine-rich single-pass membrane protein 1 (244 aa).

A helical transmembrane segment spans residues 35–55; it reads CGTIGNFLLWYFVIVFVLMFF. Disordered stretches follow at residues 65–112, 132–191, and 213–244; these read DKKD…LTPV, QSQF…LGSY, and HSQQKASVTPPMKGDSPEESSISDINTKFSKF. The segment covering 80–94 has biased composition (basic and acidic residues); sequence ASKETSYKWQSKDGA. Composition is skewed to polar residues over residues 97–112 and 132–142; these read PSQTMKKPKQNQLTPV and QSQFNEVNQNQ. Residues 161-176 show a composition bias toward basic and acidic residues; that stretch reads SWKESESEHHPSPDSI. Residues 231 to 244 show a composition bias toward polar residues; the sequence is ESSISDINTKFSKF.

Its subcellular location is the membrane. The polypeptide is Serine-rich single-pass membrane protein 1 (SSMEM1) (Macaca fascicularis (Crab-eating macaque)).